We begin with the raw amino-acid sequence, 693 residues long: Polyribonucleotide nucleotidyltransferase (693 aa).

Mg(2+)-binding residues include D489 and D495. The KH domain occupies 556–615; that stretch reads PQIHVMNINPAKIKDVVGRGGATVKGIVEKTGAQIDTSDSGEVKVFAKDKKSMDMAVAMI. The region spanning 625-693 is the S1 motif domain; it reads GQVYKGKIVK…GRVKLSLVAR (69 aa).

Belongs to the polyribonucleotide nucleotidyltransferase family. In terms of assembly, component of the RNA degradosome, which is a multiprotein complex involved in RNA processing and mRNA degradation. Mg(2+) serves as cofactor.

The protein resides in the cytoplasm. The catalysed reaction is RNA(n+1) + phosphate = RNA(n) + a ribonucleoside 5'-diphosphate. Functionally, involved in mRNA degradation. Catalyzes the phosphorolysis of single-stranded polyribonucleotides processively in the 3'- to 5'-direction. This Francisella tularensis subsp. mediasiatica (strain FSC147) protein is Polyribonucleotide nucleotidyltransferase.